Here is a 361-residue protein sequence, read N- to C-terminus: 3-dehydroquinate synthase (361 aa).

NAD(+)-binding positions include 106 to 110, 130 to 131, K143, and K152; these read GVVGD and TT. Zn(2+) is bound by residues E185, H247, and H264.

This sequence belongs to the sugar phosphate cyclases superfamily. Dehydroquinate synthase family. It depends on NAD(+) as a cofactor. Co(2+) serves as cofactor. Requires Zn(2+) as cofactor.

The protein localises to the cytoplasm. The enzyme catalyses 7-phospho-2-dehydro-3-deoxy-D-arabino-heptonate = 3-dehydroquinate + phosphate. It participates in metabolic intermediate biosynthesis; chorismate biosynthesis; chorismate from D-erythrose 4-phosphate and phosphoenolpyruvate: step 2/7. In terms of biological role, catalyzes the conversion of 3-deoxy-D-arabino-heptulosonate 7-phosphate (DAHP) to dehydroquinate (DHQ). This is 3-dehydroquinate synthase from Gloeobacter violaceus (strain ATCC 29082 / PCC 7421).